The sequence spans 374 residues: STAGKVIKCKAAITWEIKKPFSIEEIEVAPPKAHEVRIKILATGICRSDDHVTAGLLTMPLPMILGHEAAGVVESTGEGVTSLKPGDKVIPLFVPQCGECMPCLKSNGNLCIRNDLGSPSGLMADGTSRFTCKGKDIHHFIGTSTFTEYTVVHETAVARIDAAAPLEKVCLIGCGFSTGYGAAVKDAKVEPGSTCAVFGLGGVGLSTIMGCKAAGASRIIGIDINKDKFAKAKELGATECINPLDCKKPIQEVLSEMTGGGVDYSFEVIGRIDTMTAALACCQDNYGTSVIVGVPPASEKITFNPMMLFTGRTWKGSVFGGWKSKESVPKLVADYMEKKINLDGLITHTLPFDKINEGFELLRTGKSIRSVLTF.

Ser-1 bears the N-acetylserine mark. Zn(2+) contacts are provided by Cys-46, His-67, Cys-97, Cys-100, Cys-103, Cys-111, and Cys-174. Residues 199–204 (GLGGVG), Asp-223, Lys-228, 292–294 (VGV), and Arg-369 each bind NAD(+).

This sequence belongs to the zinc-containing alcohol dehydrogenase family. Class-I subfamily. It depends on Zn(2+) as a cofactor.

It is found in the cytoplasm. The catalysed reaction is a primary alcohol + NAD(+) = an aldehyde + NADH + H(+). The enzyme catalyses a secondary alcohol + NAD(+) = a ketone + NADH + H(+). This is Alcohol dehydrogenase 1 from Alligator mississippiensis (American alligator).